The primary structure comprises 372 residues: Glutamate 5-kinase (372 aa).

Lys14 contributes to the ATP binding site. Ser54, Asp141, and Asn153 together coordinate substrate. Residue Thr173–Asp174 coordinates ATP. One can recognise a PUA domain in the interval Arg280–Met358.

Belongs to the glutamate 5-kinase family.

Its subcellular location is the cytoplasm. It carries out the reaction L-glutamate + ATP = L-glutamyl 5-phosphate + ADP. It participates in amino-acid biosynthesis; L-proline biosynthesis; L-glutamate 5-semialdehyde from L-glutamate: step 1/2. Functionally, catalyzes the transfer of a phosphate group to glutamate to form L-glutamate 5-phosphate. In Pseudomonas syringae pv. syringae (strain B728a), this protein is Glutamate 5-kinase.